The primary structure comprises 392 residues: GTPase Obg (392 aa).

Residues 1 to 159 (MKFVDEATIL…RDLQLELMLL (159 aa)) form the Obg domain. Residues 127–148 (NSRFKSSVNRSPRQKTMGTPGD) are disordered. A compositionally biased stretch (polar residues) spans 129–143 (RFKSSVNRSPRQKTM). An OBG-type G domain is found at 160–333 (ADVGMLGMPN…LCWDVMAFII (174 aa)). GTP contacts are provided by residues 166–173 (GMPNAGKS), 191–195 (FTTLV), 213–216 (DIPG), 283–286 (NKID), and 314–316 (SAA). 2 residues coordinate Mg(2+): Ser173 and Thr193. A compositionally biased stretch (acidic residues) spans 363–386 (EQEVEVEDDEEWDEDWDEDDEEGV). The disordered stretch occupies residues 363 to 392 (EQEVEVEDDEEWDEDWDEDDEEGVEFIYKR).

This sequence belongs to the TRAFAC class OBG-HflX-like GTPase superfamily. OBG GTPase family. As to quaternary structure, monomer. The cofactor is Mg(2+).

It localises to the cytoplasm. An essential GTPase which binds GTP, GDP and possibly (p)ppGpp with moderate affinity, with high nucleotide exchange rates and a fairly low GTP hydrolysis rate. Plays a role in control of the cell cycle, stress response, ribosome biogenesis and in those bacteria that undergo differentiation, in morphogenesis control. This is GTPase Obg from Enterobacter sp. (strain 638).